The chain runs to 215 residues: MTCTLEKVLADAKSLVERLRDHDSAAEILIEQTTLLNKRVEAMKQYQEEIEVLNQVARHRPRSTLVMGIQQENRQIRELQQENKELHTSLEEHQSALELIMSKYREQVFRLLMASKKEDPTIVTQLREQHTNEMQAHIEKINEMATVMRKAIEVDEGRLCEDEERIKRLELENSGLRELLGISREAFLLLKRDDTSDSTSLSPLLTSTDISLRKS.

Residues L35–S183 are a coiled coil.

The protein belongs to the SIKE family.

It is found in the cytoplasm. The protein is FGFR1 oncogene partner 2 homolog (fgfr1op2) of Danio rerio (Zebrafish).